The sequence spans 92 residues: Small ribosomal subunit protein bS18 (92 aa).

The protein belongs to the bacterial ribosomal protein bS18 family. As to quaternary structure, part of the 30S ribosomal subunit. Forms a tight heterodimer with protein bS6.

Its function is as follows. Binds as a heterodimer with protein bS6 to the central domain of the 16S rRNA, where it helps stabilize the platform of the 30S subunit. This chain is Small ribosomal subunit protein bS18, found in Caulobacter sp. (strain K31).